The sequence spans 599 residues: Elongation factor 4 (599 aa).

The region spanning 4-186 is the tr-type G domain; sequence DNIRNFSIIA…EIVNKIPPPR (183 aa). Residues 16–21 and 133–136 each bind GTP; these read DHGKST and NKID.

The protein belongs to the TRAFAC class translation factor GTPase superfamily. Classic translation factor GTPase family. LepA subfamily.

It localises to the cell inner membrane. The enzyme catalyses GTP + H2O = GDP + phosphate + H(+). In terms of biological role, required for accurate and efficient protein synthesis under certain stress conditions. May act as a fidelity factor of the translation reaction, by catalyzing a one-codon backward translocation of tRNAs on improperly translocated ribosomes. Back-translocation proceeds from a post-translocation (POST) complex to a pre-translocation (PRE) complex, thus giving elongation factor G a second chance to translocate the tRNAs correctly. Binds to ribosomes in a GTP-dependent manner. This Geotalea daltonii (strain DSM 22248 / JCM 15807 / FRC-32) (Geobacter daltonii) protein is Elongation factor 4.